A 548-amino-acid chain; its full sequence is Probable malate:quinone oxidoreductase (548 aa).

The tract at residues 521-548 (DKPQAADSTPKPQLKPQPVQKEVADIAL) is disordered. Over residues 530-541 (PKPQLKPQPVQK) the composition is skewed to low complexity.

The protein belongs to the MQO family. The cofactor is FAD.

It catalyses the reaction (S)-malate + a quinone = a quinol + oxaloacetate. It participates in carbohydrate metabolism; tricarboxylic acid cycle; oxaloacetate from (S)-malate (quinone route): step 1/1. The polypeptide is Probable malate:quinone oxidoreductase (Escherichia coli O17:K52:H18 (strain UMN026 / ExPEC)).